The chain runs to 640 residues: MDSSAVTVKGLSLIDFCSTSSFKYRGHHELSESCSLNKKEEEPMLTCEHPETPSLGSPNSAVSPSQIMKSVSLRKEKDKSPELCETPKLRRKKCTLRRRLDFSFPLLKGDSDSQSRSLESNISQGVSLEKHLPGSTSGFPKEDNFSPLVTSTIKTEDVVSNSQNSRLHFSQHKTSTIEDSKDNCGLFEVECLSPIEGNDFKDSITHFSDSSLSVSDENTCPELLGSCGSQTTYGADVTTSVTPVSSLIAKIKFNGNQTLDSSGEVRDSLFTPEDSGFCSLSWDKSEDFLSDQEGSFQELLQKHRVTPKVGDQVKKPKHFGRLRRLSTLQEQGQSEDEMQTVHPNSDSGVLESLQGSEEKRGNLALSFKDLSNTPALQLVQELFMKSKRKRSQQEDDQEFFEDRDEGKIARLQRVLAGLIGKKMGIEQLDILTELQYRNLKHILAMVLESLTSESLYSAWNVSRNWREIVAQDKKANRRRKLYIIQLRASAQGAAVLRVQDAATRLCLLSRLALRSVQAQAQAPSGEQVPTLSPWGDVLTPVASSSLTHLRSKQEQYVKVARTLFTDEALKPCPRCQSPAKYQPHKKRGLCSRLACGFDFCVLCLCAYHGSEDCRRGSAKARGSKDVLPGSAQSKRNLKRL.

The residue at position 176 (threonine 176) is a Phosphothreonine. At serine 275 the chain carries Phosphoserine. Positions 328 to 354 are disordered; it reads LQEQGQSEDEMQTVHPNSDSGVLESLQ. The F-box domain maps to 423–480; the sequence is MGIEQLDILTELQYRNLKHILAMVLESLTSESLYSAWNVSRNWREIVAQDKKANRRRK. Residues 568–616 form a ZBR-type zinc finger; that stretch reads ALKPCPRCQSPAKYQPHKKRGLCSRLACGFDFCVLCLCAYHGSEDCRRG. Residues cysteine 572, cysteine 575, cysteine 590, cysteine 595, cysteine 600, cysteine 603, histidine 608, and cysteine 613 each contribute to the Zn(2+) site. A disordered region spans residues 615–640; the sequence is RGSAKARGSKDVLPGSAQSKRNLKRL.

In terms of assembly, part of a SCF (SKP1-cullin-F-box) protein ligase complex. Interaction with SKP1 does not occur. Interacts with ANAPC2; the interaction is direct, ANAPC4, CDC16, CDC23; the interaction is direct, ANAPC10; the interaction is direct and CDC26, during spermatogenesis. Interacts with CDC20. Phosphorylated on Thr-176 and Ser-275 in response to calcium, which is a prerequisite for ubiquitination and proteasomal degradation. Post-translationally, ubiquitinated in response to calcium, which promotes proteasomal degradation. As to expression, present in testis and ovary (at protein level). Expression is high in immature oocytes, and diminishes after oocyte activation. Expressed post-meiotically in spermatids and sperm.

Its pathway is protein modification; protein ubiquitination. Functionally, required to establish and maintain the arrest of oocytes at the second meiotic metaphase until fertilization. Acts by inhibiting the anaphase-promoting complex/cyclosome (APC/C) ubiquitin ligase. Probably recognizes and binds to some phosphorylated proteins and promotes their ubiquitination and degradation. Plays a vital role in modulating the ubiquitilation of CCNB1 and CDK1 during gametogenesis. This is F-box only protein 43 (Fbxo43) from Mus musculus (Mouse).